The chain runs to 455 residues: UDP-N-acetylmuramoylalanine--D-glutamate ligase (455 aa).

117–123 contacts ATP; the sequence is GSAGKTT.

This sequence belongs to the MurCDEF family.

The protein localises to the cytoplasm. It carries out the reaction UDP-N-acetyl-alpha-D-muramoyl-L-alanine + D-glutamate + ATP = UDP-N-acetyl-alpha-D-muramoyl-L-alanyl-D-glutamate + ADP + phosphate + H(+). The protein operates within cell wall biogenesis; peptidoglycan biosynthesis. Cell wall formation. Catalyzes the addition of glutamate to the nucleotide precursor UDP-N-acetylmuramoyl-L-alanine (UMA). This chain is UDP-N-acetylmuramoylalanine--D-glutamate ligase, found in Symbiobacterium thermophilum (strain DSM 24528 / JCM 14929 / IAM 14863 / T).